The primary structure comprises 188 residues: SAYSvFN domain-containing protein 1 (188 aa).

The segment covering methionine 1–glutamate 10 has biased composition (basic and acidic residues). 2 disordered regions span residues methionine 1–lysine 43 and alanine 60–threonine 80. Residues methionine 1 to lysine 100 lie on the Cytoplasmic side of the membrane. Composition is skewed to low complexity over residues serine 22 to lysine 43 and alanine 60 to glutamine 75. Residues serine 86 to lysine 100 form a middle helical (MH) region. The helical intramembrane region spans valine 101–phenylalanine 121. At valine 122–proline 188 the chain is on the cytoplasmic side.

This sequence belongs to the SAYSD1 family. Associates (via N-terminus) with ribosomes. In terms of tissue distribution, enriched in testis; predominantly expressed in round and elongating spermatids.

It localises to the endoplasmic reticulum membrane. The protein resides in the cytoplasmic vesicle membrane. Its function is as follows. Ufmylation 'reader' component of a translocation-associated quality control pathway, a mechanism that takes place when a ribosome has stalled during translation, and which is required to degrade clogged substrates. Specifically recognizes and binds ufmylated ribosomes when a ribosome has stalled, promoting the transport of stalled nascent chain via the TRAPP complex to lysosomes for degradation. The polypeptide is SAYSvFN domain-containing protein 1 (Mus musculus (Mouse)).